The sequence spans 235 residues: MKFLLRLLSKLLCRIKLFSNRLYYIGGNDALPPPLSKDEEDDLVNKLVNGDESIRSILIERNLRLVVYIARKFENTGVGVEDLISVGTIGLIKAVNTFDPTKKIKLATYGSRCIENEILMYLRRNSKVKAEISFYEPLNIDWDGNKLLLSDILGTDNDCVYNLIEGEVDKQLLLFALKKLNEREKRIVELRYGLTGVGEKTQKEVADMLGISQSYISRLEKRIIKRLKKEINKML.

The Polymerase core binding signature appears at 82–95; that stretch reads DLISVGTIGLIKAV. The segment at residues 202 to 221 is a DNA-binding region (H-T-H motif); sequence QKEVADMLGISQSYISRLEK.

Belongs to the sigma-70 factor family.

In terms of biological role, sigma factors are initiation factors that promote the attachment of RNA polymerase to specific initiation sites and are then released. This sigma factor is responsible for the expression of sporulation specific genes. The protein is RNA polymerase sigma-E factor (sigE) of Clostridium acetobutylicum (strain ATCC 824 / DSM 792 / JCM 1419 / IAM 19013 / LMG 5710 / NBRC 13948 / NRRL B-527 / VKM B-1787 / 2291 / W).